Reading from the N-terminus, the 349-residue chain is Peptide transport system ATP-binding protein SapD (349 aa).

In terms of domain architecture, ABC transporter spans 1–259 (MALLDICNLN…PHHPYTQALI (259 aa)). 40-47 (GESGSGKS) serves as a coordination point for ATP.

This sequence belongs to the ABC transporter superfamily.

It is found in the cell inner membrane. Functionally, involved in a peptide intake transport system that plays a role in the resistance to antimicrobial peptides. In Haemophilus influenzae (strain ATCC 51907 / DSM 11121 / KW20 / Rd), this protein is Peptide transport system ATP-binding protein SapD (sapD).